We begin with the raw amino-acid sequence, 471 residues long: Glutamine synthetase (471 aa).

The region spanning 14 to 99 (QKIQMIDLKF…ICSIKEPRTG (86 aa)) is the GS beta-grasp domain. The GS catalytic domain maps to 106–471 (PRVIAQKAID…PYEFYLYYDC (366 aa)). Residues Glu-131 and Glu-133 each coordinate Mg(2+). Glu-208 serves as a coordination point for ATP. Mg(2+) contacts are provided by Glu-213 and Glu-221. Residues 265 to 266 (NG) and Gly-266 contribute to the L-glutamate site. Position 270 (His-270) interacts with Mg(2+). Residues 272-274 (HQS) and Ser-274 contribute to the ATP site. Arg-322, Glu-328, and Arg-340 together coordinate L-glutamate. Positions 340, 345, and 354 each coordinate ATP. A Mg(2+)-binding site is contributed by Glu-359. Arg-361 contacts L-glutamate. Tyr-399 is subject to O-AMP-tyrosine.

It belongs to the glutamine synthetase family. In terms of assembly, oligomer of 12 subunits arranged in the form of two hexagons. It depends on Mg(2+) as a cofactor.

Its subcellular location is the cytoplasm. The catalysed reaction is L-glutamate + NH4(+) + ATP = L-glutamine + ADP + phosphate + H(+). The activity of this enzyme could be controlled by adenylation under conditions of abundant glutamine. Functionally, involved in nitrogen metabolism via ammonium assimilation. Catalyzes the ATP-dependent biosynthesis of glutamine from glutamate and ammonia. The polypeptide is Glutamine synthetase (Microchaete diplosiphon (Fremyella diplosiphon)).